Consider the following 361-residue polypeptide: Ribosomal RNA large subunit methyltransferase M (361 aa).

S-adenosyl-L-methionine contacts are provided by residues Ser187, 220-223 (CPGG), Asp239, Asp259, and Asp276. Catalysis depends on Lys305, which acts as the Proton acceptor.

It belongs to the class I-like SAM-binding methyltransferase superfamily. RNA methyltransferase RlmE family. RlmM subfamily. Monomer.

The protein resides in the cytoplasm. The catalysed reaction is cytidine(2498) in 23S rRNA + S-adenosyl-L-methionine = 2'-O-methylcytidine(2498) in 23S rRNA + S-adenosyl-L-homocysteine + H(+). Its function is as follows. Catalyzes the 2'-O-methylation at nucleotide C2498 in 23S rRNA. This Shewanella sp. (strain ANA-3) protein is Ribosomal RNA large subunit methyltransferase M.